The sequence spans 269 residues: UPF0162 protein BUsg_167 (269 aa).

It belongs to the UPF0162 family.

The protein is UPF0162 protein BUsg_167 of Buchnera aphidicola subsp. Schizaphis graminum (strain Sg).